The sequence spans 368 residues: Outer membrane protein assembly factor BamC (368 aa).

The first 18 residues, 1–18, serve as a signal peptide directing secretion; that stretch reads MTTKFFIGTAIAVSVLSA. A lipid anchor (N-palmitoyl cysteine) is attached at Cys19. Residue Cys19 is the site of S-diacylglycerol cysteine attachment.

This sequence belongs to the BamC family. Part of the Bam complex.

The protein localises to the cell outer membrane. In terms of biological role, part of the outer membrane protein assembly complex, which is involved in assembly and insertion of beta-barrel proteins into the outer membrane. This Pseudoalteromonas atlantica (strain T6c / ATCC BAA-1087) protein is Outer membrane protein assembly factor BamC.